The following is a 352-amino-acid chain: Inorganic triphosphatase (352 aa).

Residues 6-203 form the CYTH domain; it reads LQEIELKLAI…KRGYLLGSKQ (198 aa).

It catalyses the reaction triphosphate + H2O = phosphate + diphosphate. In terms of biological role, involved in the hydrolysis of the beta-gamma-phosphoanhydride linkage of triphosphate-containing substrates (inorganic or nucleoside-linked). Catalyzes the hydrolysis of inorganic triphosphate (PPPi), which could be cytotoxic because of its high affinity for calcium ion, thereby interfering with calcium signaling. This is Inorganic triphosphatase from Haemophilus influenzae (strain ATCC 51907 / DSM 11121 / KW20 / Rd).